A 288-amino-acid polypeptide reads, in one-letter code: MTAMILDGRALAKTLREELRADIQAFVQTTGVTPSLAVVKIAGDPASERYTRTIRKGCEDIGIVFYDHTLPPDTTQAALEETLHALSFDRAVNGILLHLPLPPGFDSNRAIAQIDPHKDVDGVHPYNAGLLAMGQPTMVPNTPAGGMELLLRNHILIKGQRATVVGRSVVVGKPMALLLLQEHATVTIAHSRTKDLASVVREADIVVAATGKPGLITADMVRPGAVVVDFGVNVLGDGKVVGDVDFAGVAEIASAITPVPGGTGPVTNIMLLRNVLRAARLQGVGRGE.

Residues 166 to 168 (GRS), S191, and V232 contribute to the NADP(+) site.

The protein belongs to the tetrahydrofolate dehydrogenase/cyclohydrolase family. As to quaternary structure, homodimer.

It carries out the reaction (6R)-5,10-methylene-5,6,7,8-tetrahydrofolate + NADP(+) = (6R)-5,10-methenyltetrahydrofolate + NADPH. The catalysed reaction is (6R)-5,10-methenyltetrahydrofolate + H2O = (6R)-10-formyltetrahydrofolate + H(+). It functions in the pathway one-carbon metabolism; tetrahydrofolate interconversion. Its function is as follows. Catalyzes the oxidation of 5,10-methylenetetrahydrofolate to 5,10-methenyltetrahydrofolate and then the hydrolysis of 5,10-methenyltetrahydrofolate to 10-formyltetrahydrofolate. The sequence is that of Bifunctional protein FolD from Roseiflexus castenholzii (strain DSM 13941 / HLO8).